The primary structure comprises 215 residues: Adenylate kinase (215 aa).

10-15 provides a ligand contact to ATP; sequence GAGKGT. Residues 30–59 are NMP; that stretch reads STGDMFRAAMKNETEMGKLAKSFIDKGELV. AMP contacts are provided by residues Thr-31, Arg-36, 57–59, 86–89, and Gln-93; these read ELV and GYPR. Positions 127 to 165 are LID; it reads GRYICRNCGATYHKIFNPTKVEGVCDVCGSHDLYQRADD. Residue Arg-128 participates in ATP binding. Zn(2+) contacts are provided by Cys-131 and Cys-134. 137–138 is a binding site for ATP; sequence TY. Cys-151 and Cys-154 together coordinate Zn(2+). 2 residues coordinate AMP: Arg-162 and Arg-173. Residue Gln-201 participates in ATP binding.

Belongs to the adenylate kinase family. Monomer.

It is found in the cytoplasm. It carries out the reaction AMP + ATP = 2 ADP. It functions in the pathway purine metabolism; AMP biosynthesis via salvage pathway; AMP from ADP: step 1/1. Catalyzes the reversible transfer of the terminal phosphate group between ATP and AMP. Plays an important role in cellular energy homeostasis and in adenine nucleotide metabolism. The sequence is that of Adenylate kinase from Lactococcus lactis subsp. lactis (strain IL1403) (Streptococcus lactis).